Consider the following 22-residue polypeptide: Superoxide dismutase [Cu-Zn] (22 aa).

The protein belongs to the Cu-Zn superoxide dismutase family. Homodimer. The cofactor is Cu cation. Requires Zn(2+) as cofactor.

It is found in the cytoplasm. The enzyme catalyses 2 superoxide + 2 H(+) = H2O2 + O2. Destroys radicals which are normally produced within the cells and which are toxic to biological systems. This chain is Superoxide dismutase [Cu-Zn], found in Hordeum vulgare (Barley).